Here is a 614-residue protein sequence, read N- to C-terminus: Glutamyl-tRNA(Gln) amidotransferase subunit E (614 aa).

This sequence belongs to the GatB/GatE family. GatE subfamily. Heterodimer of GatD and GatE.

It catalyses the reaction L-glutamyl-tRNA(Gln) + L-glutamine + ATP + H2O = L-glutaminyl-tRNA(Gln) + L-glutamate + ADP + phosphate + H(+). Its function is as follows. Allows the formation of correctly charged Gln-tRNA(Gln) through the transamidation of misacylated Glu-tRNA(Gln) in organisms which lack glutaminyl-tRNA synthetase. The reaction takes place in the presence of glutamine and ATP through an activated gamma-phospho-Glu-tRNA(Gln). The GatDE system is specific for glutamate and does not act on aspartate. This is Glutamyl-tRNA(Gln) amidotransferase subunit E from Methanospirillum hungatei JF-1 (strain ATCC 27890 / DSM 864 / NBRC 100397 / JF-1).